The sequence spans 378 residues: Mas-related G-protein coupled receptor MRG (378 aa).

Residues 1-77 lie on the Extracellular side of the membrane; sequence MVWGKICWFS…VGQQALPLNI (77 aa). N-linked (GlcNAc...) asparagine glycans are attached at residues N54 and N57. The chain crosses the membrane as a helical span at residues 78–101; that stretch reads IAPKAVLVSLCGVLLNGTVFWLLC. Residues 102-109 are Cytoplasmic-facing; sequence CGATNPYM. Residues 110–136 form a helical membrane-spanning segment; that stretch reads VYILHLVAADVIYLCCSAVGFLQVTLL. At 137–154 the chain is on the extracellular side; that stretch reads TYHGVVFFIPDFLAILSP. Residues 155–169 traverse the membrane as a helical segment; sequence FSFEVCLCLLVAIST. The Cytoplasmic segment spans residues 170-191; that stretch reads ERCVCVLFPIWYRCHRPKYTSN. The chain crosses the membrane as a helical span at residues 192 to 207; that stretch reads VVCTLIWGLPFCINIV. The Extracellular portion of the chain corresponds to 208–221; the sequence is KSLFLTYWKHVKAC. A helical membrane pass occupies residues 222–248; the sequence is VIFLKLSGLFHAILSLVMCVSSLTLLI. Residues 249–264 are Cytoplasmic-facing; sequence RFLCCSQQQKATRVYA. A helical transmembrane segment spans residues 265–286; that stretch reads VVQISAPMFLLWALPLSVAPLI. The Extracellular portion of the chain corresponds to 287–297; the sequence is TDFKMFVTTSY. The helical transmembrane segment at 298–317 threads the bilayer; it reads LISLFLIINSSANPIIYFFV. Over 318-378 the chain is Cytoplasmic; sequence GSLRKKRLKE…PREHRVDVET (61 aa). Residues 344 to 378 form a disordered region; that stretch reads GRNKKAAGIDPMEQPHSTQHVENLLPREHRVDVET. Residues 368–378 show a composition bias toward basic and acidic residues; that stretch reads LPREHRVDVET.

It belongs to the G-protein coupled receptor 1 family. Mas subfamily.

It is found in the cell membrane. This chain is Mas-related G-protein coupled receptor MRG (MAS1L), found in Homo sapiens (Human).